Consider the following 155-residue polypeptide: Endoribonuclease YbeY (155 aa).

His-120, His-124, and His-130 together coordinate Zn(2+).

The protein belongs to the endoribonuclease YbeY family. Zn(2+) is required as a cofactor.

It localises to the cytoplasm. Its function is as follows. Single strand-specific metallo-endoribonuclease involved in late-stage 70S ribosome quality control and in maturation of the 3' terminus of the 16S rRNA. The chain is Endoribonuclease YbeY from Staphylococcus epidermidis (strain ATCC 12228 / FDA PCI 1200).